A 906-amino-acid chain; its full sequence is Alanine--tRNA ligase (906 aa).

Zn(2+)-binding residues include His600, His604, Cys703, and His707.

It belongs to the class-II aminoacyl-tRNA synthetase family. In terms of assembly, homodimer. The cofactor is Zn(2+).

Its subcellular location is the cytoplasm. It catalyses the reaction tRNA(Ala) + L-alanine + ATP = L-alanyl-tRNA(Ala) + AMP + diphosphate. In terms of biological role, catalyzes the attachment of alanine to tRNA(Ala) in a two-step reaction: alanine is first activated by ATP to form Ala-AMP and then transferred to the acceptor end of tRNA(Ala). Incorrectly charged aminoacyl-tRNA(Ala) is also edited in situ by the editing domain. The sequence is that of Alanine--tRNA ligase (alaS) from Archaeoglobus fulgidus (strain ATCC 49558 / DSM 4304 / JCM 9628 / NBRC 100126 / VC-16).